A 348-amino-acid polypeptide reads, in one-letter code: Dihydroorotate dehydrogenase (quinone) (348 aa).

Residues 65–69 and Thr-89 contribute to the FMN site; that span reads AGMDK. A substrate-binding site is contributed by Lys-69. Residue 114–118 participates in substrate binding; that stretch reads NRMGF. Residues Asn-143 and Asn-176 each coordinate FMN. A substrate-binding site is contributed by Asn-176. Residue Ser-179 is the Nucleophile of the active site. A substrate-binding site is contributed by Asn-181. Residues Lys-221 and Thr-249 each coordinate FMN. 250–251 contacts substrate; it reads NT. FMN is bound by residues Gly-272, Gly-301, and 322-323; that span reads YT.

The protein belongs to the dihydroorotate dehydrogenase family. Type 2 subfamily. In terms of assembly, monomer. FMN is required as a cofactor.

The protein resides in the cell membrane. The enzyme catalyses (S)-dihydroorotate + a quinone = orotate + a quinol. The protein operates within pyrimidine metabolism; UMP biosynthesis via de novo pathway; orotate from (S)-dihydroorotate (quinone route): step 1/1. Catalyzes the conversion of dihydroorotate to orotate with quinone as electron acceptor. This Akkermansia muciniphila (strain ATCC BAA-835 / DSM 22959 / JCM 33894 / BCRC 81048 / CCUG 64013 / CIP 107961 / Muc) protein is Dihydroorotate dehydrogenase (quinone).